The chain runs to 251 residues: Putative integrase/recombinase y4eF (251 aa).

In terms of domain architecture, Core-binding (CB) spans 1-40; it reads MLGREDIRTYQVYLANEKKLAPGSIHIALSALRFFFNVTL. Residues 58 to 231 form the Tyr recombinase domain; the sequence is KLPIILSPDE…ATNKVCATES (174 aa). Residues Arg93, Lys118, His183, Arg186, and His209 contribute to the active site. Catalysis depends on Tyr218, which acts as the O-(3'-phospho-DNA)-tyrosine intermediate.

The protein belongs to the 'phage' integrase family.

The polypeptide is Putative integrase/recombinase y4eF (Sinorhizobium fredii (strain NBRC 101917 / NGR234)).